A 688-amino-acid polypeptide reads, in one-letter code: Glycine--tRNA ligase beta subunit (688 aa).

Belongs to the class-II aminoacyl-tRNA synthetase family. Tetramer of two alpha and two beta subunits.

The protein resides in the cytoplasm. It catalyses the reaction tRNA(Gly) + glycine + ATP = glycyl-tRNA(Gly) + AMP + diphosphate. This chain is Glycine--tRNA ligase beta subunit, found in Aliivibrio salmonicida (strain LFI1238) (Vibrio salmonicida (strain LFI1238)).